The following is a 93-amino-acid chain: NADH-ubiquinone oxidoreductase chain 4L (93 aa).

Helical transmembrane passes span 3–23 (LTILLIIIGLIGYIINSGPLG), 27–47 (IIKLFISIEIMLLGVTLLIIL), and 55–75 (ILGLIIGIIVLIITGIESAIG).

It belongs to the complex I subunit 4L family.

The protein localises to the mitochondrion membrane. The catalysed reaction is a ubiquinone + NADH + 5 H(+)(in) = a ubiquinol + NAD(+) + 4 H(+)(out). In terms of biological role, core subunit of the mitochondrial membrane respiratory chain NADH dehydrogenase (Complex I) that is believed to belong to the minimal assembly required for catalysis. Complex I functions in the transfer of electrons from NADH to the respiratory chain. The immediate electron acceptor for the enzyme is believed to be ubiquinone. This is NADH-ubiquinone oxidoreductase chain 4L (ND4L) from Wickerhamomyces canadensis (Yeast).